Here is a 129-residue protein sequence, read N- to C-terminus: Phosphoribosyl-AMP cyclohydrolase (129 aa).

D78 contributes to the Mg(2+) binding site. A Zn(2+)-binding site is contributed by C79. Mg(2+)-binding residues include D80 and D82. The Zn(2+) site is built by C96 and C103.

This sequence belongs to the PRA-CH family. Homodimer. Mg(2+) is required as a cofactor. The cofactor is Zn(2+).

Its subcellular location is the cytoplasm. The enzyme catalyses 1-(5-phospho-beta-D-ribosyl)-5'-AMP + H2O = 1-(5-phospho-beta-D-ribosyl)-5-[(5-phospho-beta-D-ribosylamino)methylideneamino]imidazole-4-carboxamide. Its pathway is amino-acid biosynthesis; L-histidine biosynthesis; L-histidine from 5-phospho-alpha-D-ribose 1-diphosphate: step 3/9. Catalyzes the hydrolysis of the adenine ring of phosphoribosyl-AMP. In Nitrosomonas eutropha (strain DSM 101675 / C91 / Nm57), this protein is Phosphoribosyl-AMP cyclohydrolase.